Reading from the N-terminus, the 139-residue chain is D-ribose pyranase (139 aa).

Histidine 20 acts as the Proton donor in catalysis. Substrate is bound by residues aspartate 28, histidine 106, and 128 to 130; that span reads YAN.

The protein belongs to the RbsD / FucU family. RbsD subfamily. Homodecamer.

Its subcellular location is the cytoplasm. The catalysed reaction is beta-D-ribopyranose = beta-D-ribofuranose. Its pathway is carbohydrate metabolism; D-ribose degradation; D-ribose 5-phosphate from beta-D-ribopyranose: step 1/2. Functionally, catalyzes the interconversion of beta-pyran and beta-furan forms of D-ribose. The protein is D-ribose pyranase of Aeromonas salmonicida (strain A449).